Here is a 264-residue protein sequence, read N- to C-terminus: Cysteine-rich repeat secretory protein 26 (264 aa).

The first 27 residues, 1-27, serve as a signal peptide directing secretion; the sequence is MSSNIFGSVPILVVVAIQLLLVHNVSS. Gnk2-homologous domains follow at residues 34–142 and 148–261; these read YLNH…SVDS and YKRM…LYPF.

This sequence belongs to the cysteine-rich repeat secretory protein family.

The protein localises to the secreted. The chain is Cysteine-rich repeat secretory protein 26 (CRRSP26) from Arabidopsis thaliana (Mouse-ear cress).